The sequence spans 373 residues: Eukaryotic translation initiation factor 3 subunit M (373 aa).

S2 bears the N-acetylserine mark. Phosphoserine is present on residues S2 and S152. One can recognise a PCI domain in the interval 180–338 (AASKVMVELL…RKVVVSHSTH (159 aa)). K253 is modified (N6-acetyllysine). Position 366 is a phosphoserine (S366).

This sequence belongs to the eIF-3 subunit M family. As to quaternary structure, component of the eukaryotic translation initiation factor 3 (eIF-3) complex, which is composed of 13 subunits: EIF3A, EIF3B, EIF3C, EIF3D, EIF3E, EIF3F, EIF3G, EIF3H, EIF3I, EIF3J, EIF3K, EIF3L and EIF3M. The eIF-3 complex appears to include 3 stable modules: module A is composed of EIF3A, EIF3B, EIF3G and EIF3I; module B is composed of EIF3F, EIF3H, and EIF3M; and module C is composed of EIF3C, EIF3D, EIF3E, EIF3K and EIF3L. EIF3C of module C binds EIF3B of module A and EIF3H of module B, thereby linking the three modules. EIF3J is a labile subunit that binds to the eIF-3 complex via EIF3B. The eIF-3 complex interacts with RPS6KB1 under conditions of nutrient depletion. Mitogenic stimulation leads to binding and activation of a complex composed of MTOR and RPTOR, leading to phosphorylation and release of RPS6KB1 and binding of EIF4B to eIF-3.

It is found in the cytoplasm. In terms of biological role, component of the eukaryotic translation initiation factor 3 (eIF-3) complex, which is required for several steps in the initiation of protein synthesis. The eIF-3 complex associates with the 40S ribosome and facilitates the recruitment of eIF-1, eIF-1A, eIF-2:GTP:methionyl-tRNAi and eIF-5 to form the 43S pre-initiation complex (43S PIC). The eIF-3 complex stimulates mRNA recruitment to the 43S PIC and scanning of the mRNA for AUG recognition. The eIF-3 complex is also required for disassembly and recycling of post-termination ribosomal complexes and subsequently prevents premature joining of the 40S and 60S ribosomal subunits prior to initiation. The eIF-3 complex specifically targets and initiates translation of a subset of mRNAs involved in cell proliferation, including cell cycling, differentiation and apoptosis, and uses different modes of RNA stem-loop binding to exert either translational activation or repression. This Bos taurus (Bovine) protein is Eukaryotic translation initiation factor 3 subunit M.